We begin with the raw amino-acid sequence, 1896 residues long: von Willebrand factor A domain-containing protein 8 (1896 aa).

Residues 1–18 constitute a mitochondrion transit peptide; sequence MHSRILFKGTAAAVAARR. An ATP-binding site is contributed by 439–446; the sequence is GAKGCGKS. The interval 1536–1564 is disordered; sequence GLDVSSPKHGKIDAKNAPHVGGNQWAGGT. The 183-residue stretch at 1705-1887 folds into the VWFA domain; the sequence is RLRVLADVSG…KEIPQILQQI (183 aa).

Monomer.

Its subcellular location is the mitochondrion. Exhibits ATPase activity in vitro. This chain is von Willebrand factor A domain-containing protein 8 (vwa8), found in Danio rerio (Zebrafish).